We begin with the raw amino-acid sequence, 37 residues long: Large ribosomal subunit protein bL36c (37 aa).

It belongs to the bacterial ribosomal protein bL36 family.

It is found in the plastid. The protein localises to the chloroplast. The protein is Large ribosomal subunit protein bL36c (rpl36) of Marchantia polymorpha (Common liverwort).